The sequence spans 276 residues: MRRKNLTEVTEFVFLGFSRFHKHHITLFVVFLILYTLTVAGNAIIMTIICIDRHLHTPMYFFLSMLASSKTVYTLFIIPQMLSSFVTQTQPISLAGCTTQTFFFVTLAINNCFLLTVMGYDHYMAICNPLRYRVITSKKVCVQLVCGAFSIGLAMAAVQVTSIFTLPFCHTVVGHFFCDILPVMKLSCINTTINEIINFVVRLFVILVPMGLVFISYVLIISTVLKIASAEGWKKTFATCAFHLTVVIVHYGCASIAYLMPKSENSIEQDLLLSVT.

Over Met1–Ile25 the chain is Extracellular. The N-linked (GlcNAc...) asparagine glycan is linked to Asn5. The chain crosses the membrane as a helical span at residues Thr26–Met46. At Thr47 to His54 the chain is on the cytoplasmic side. Residues Leu55–Leu75 traverse the membrane as a helical segment. Residues Phe76–Thr99 lie on the Extracellular side of the membrane. A disulfide bond links Cys97 and Cys188. A helical transmembrane segment spans residues Gln100–Tyr120. The Cytoplasmic segment spans residues Asp121–Lys139. Residues Val140 to Val160 traverse the membrane as a helical segment. At Thr161 to Ile196 the chain is on the extracellular side. N-linked (GlcNAc...) asparagine glycosylation is present at Asn190. A helical transmembrane segment spans residues Ile197 to Ser216. The Cytoplasmic segment spans residues Tyr217–Thr236. A helical transmembrane segment spans residues Phe237–Ala257. Over Tyr258–Asp270 the chain is Extracellular. The helical transmembrane segment at Leu271–Thr276 threads the bilayer.

Belongs to the G-protein coupled receptor 1 family.

The protein localises to the cell membrane. Its function is as follows. Odorant receptor. This chain is Putative olfactory receptor 10J6 (OR10J6P), found in Homo sapiens (Human).